The chain runs to 535 residues: Bifunctional purine biosynthesis protein PurH (535 aa).

One can recognise an MGS-like domain in the interval 6 to 151 (TRLPIRRALI…KNHKDVAIVV (146 aa)).

It belongs to the PurH family.

It carries out the reaction (6R)-10-formyltetrahydrofolate + 5-amino-1-(5-phospho-beta-D-ribosyl)imidazole-4-carboxamide = 5-formamido-1-(5-phospho-D-ribosyl)imidazole-4-carboxamide + (6S)-5,6,7,8-tetrahydrofolate. The enzyme catalyses IMP + H2O = 5-formamido-1-(5-phospho-D-ribosyl)imidazole-4-carboxamide. It participates in purine metabolism; IMP biosynthesis via de novo pathway; 5-formamido-1-(5-phospho-D-ribosyl)imidazole-4-carboxamide from 5-amino-1-(5-phospho-D-ribosyl)imidazole-4-carboxamide (10-formyl THF route): step 1/1. The protein operates within purine metabolism; IMP biosynthesis via de novo pathway; IMP from 5-formamido-1-(5-phospho-D-ribosyl)imidazole-4-carboxamide: step 1/1. The sequence is that of Bifunctional purine biosynthesis protein PurH from Pseudomonas fluorescens (strain SBW25).